The primary structure comprises 243 residues: NH(3)-dependent NAD(+) synthetase (243 aa).

Residue 31-38 (GLSGGVDS) coordinates ATP. Asp37 is a binding site for Mg(2+). Arg116 is a binding site for deamido-NAD(+). Position 136 (Thr136) interacts with ATP. Glu141 serves as a coordination point for Mg(2+). Lys149 and Asp156 together coordinate deamido-NAD(+). ATP is bound by residues Lys165 and Ser187. 233–234 (HK) contributes to the deamido-NAD(+) binding site.

It belongs to the NAD synthetase family. As to quaternary structure, homodimer.

The catalysed reaction is deamido-NAD(+) + NH4(+) + ATP = AMP + diphosphate + NAD(+) + H(+). Its pathway is cofactor biosynthesis; NAD(+) biosynthesis; NAD(+) from deamido-NAD(+) (ammonia route): step 1/1. Its function is as follows. Catalyzes the ATP-dependent amidation of deamido-NAD to form NAD. Uses ammonia as a nitrogen source. The polypeptide is NH(3)-dependent NAD(+) synthetase (Carboxydothermus hydrogenoformans (strain ATCC BAA-161 / DSM 6008 / Z-2901)).